Reading from the N-terminus, the 640-residue chain is Chaperone protein DnaK (640 aa).

The residue at position 198 (Thr-198) is a Phosphothreonine; by autocatalysis. A disordered region spans residues 600 to 640 (KTQGAGAEGSEQPHGEQEAGGAAKGETVVDADFEEVKDDKK). A compositionally biased stretch (acidic residues) spans 628–640 (VDADFEEVKDDKK).

Belongs to the heat shock protein 70 family.

In terms of biological role, acts as a chaperone. The protein is Chaperone protein DnaK of Geobacter sp. (strain M21).